Reading from the N-terminus, the 109-residue chain is ATP-dependent Clp protease adapter protein ClpS (109 aa).

Residues 1–25 (MSERKEGDSGAGVRSAVITQTKPKT) form a disordered region.

The protein belongs to the ClpS family. Binds to the N-terminal domain of the chaperone ClpA.

In terms of biological role, involved in the modulation of the specificity of the ClpAP-mediated ATP-dependent protein degradation. The sequence is that of ATP-dependent Clp protease adapter protein ClpS from Phenylobacterium zucineum (strain HLK1).